A 145-amino-acid chain; its full sequence is D-aminoacyl-tRNA deacylase (145 aa).

The Gly-cisPro motif, important for rejection of L-amino acids motif lies at 137–138 (GP).

It belongs to the DTD family. As to quaternary structure, homodimer.

It is found in the cytoplasm. The enzyme catalyses glycyl-tRNA(Ala) + H2O = tRNA(Ala) + glycine + H(+). It catalyses the reaction a D-aminoacyl-tRNA + H2O = a tRNA + a D-alpha-amino acid + H(+). Its function is as follows. An aminoacyl-tRNA editing enzyme that deacylates mischarged D-aminoacyl-tRNAs. Also deacylates mischarged glycyl-tRNA(Ala), protecting cells against glycine mischarging by AlaRS. Acts via tRNA-based rather than protein-based catalysis; rejects L-amino acids rather than detecting D-amino acids in the active site. By recycling D-aminoacyl-tRNA to D-amino acids and free tRNA molecules, this enzyme counteracts the toxicity associated with the formation of D-aminoacyl-tRNA entities in vivo and helps enforce protein L-homochirality. This is D-aminoacyl-tRNA deacylase from Pectobacterium atrosepticum (strain SCRI 1043 / ATCC BAA-672) (Erwinia carotovora subsp. atroseptica).